A 280-amino-acid chain; its full sequence is Putative aquaporin-10 (280 aa).

Over 1–8 (MEAVSSEY) the chain is Cytoplasmic. Residues 9–29 (YFPLYSALGYFALVFGIGEIA) form a helical membrane-spanning segment. The Extracellular segment spans residues 30–64 (RIITAKYVSPRGNSQLFLYELIGTIQMCTCVYENG). Residues 65 to 85 (IIFKNYGFPAIFICVALLLTA) form a helical membrane-spanning segment. Residues 86–114 (GNIFNRGAMTNCAPIFEQFVFGNLGSSKF) are Cytoplasmic-facing. A helical membrane pass occupies residues 115–135 (LTILSAQLIGATFASKFAYLI). Residues 136–164 (WNITAPYSTAHLENASNLECILHYKQTAG) lie on the Extracellular side of the membrane. Residues 165 to 185 (IVIGFEIVGAFVVRIVVAQLL) traverse the membrane as a helical segment. At 186 to 193 (ARPALIKL) the chain is on the cytoplasmic side. The chain crosses the membrane as a helical span at residues 194–214 (IPFAISAYLSLALYVVGVPGL). Residues 215–233 (NPIVATARLYGCRGIDNSS) are Extracellular-facing. A helical membrane pass occupies residues 234 to 254 (FFILYWFCPVLGWLTGAYVVG). Over 255-280 (QKSPSKKSAKDVKAEKKAKAAAKKSD) the chain is Cytoplasmic. A disordered region spans residues 256–280 (KSPSKKSAKDVKAEKKAKAAAKKSD). The span at 262 to 280 (SAKDVKAEKKAKAAAKKSD) shows a compositional bias: basic and acidic residues.

This sequence belongs to the MIP/aquaporin (TC 1.A.8) family.

The protein localises to the membrane. The chain is Putative aquaporin-10 (aqp-10) from Caenorhabditis elegans.